Here is a 288-residue protein sequence, read N- to C-terminus: UTP--glucose-1-phosphate uridylyltransferase (288 aa).

Belongs to the UDPGP type 2 family.

It carries out the reaction alpha-D-glucose 1-phosphate + UTP + H(+) = UDP-alpha-D-glucose + diphosphate. It participates in glycolipid metabolism; diglucosyl-diacylglycerol biosynthesis. Functionally, catalyzes the formation of UDP-glucose from glucose-1-phosphate and UTP. This is an intermediate step in the biosynthesis of diglucosyl-diacylglycerol (Glc2-DAG), i.e. the predominant glycolipid found in the S.aureus membrane, which is also used as a membrane anchor for lipoteichoic acid (LTA). The polypeptide is UTP--glucose-1-phosphate uridylyltransferase (gtaB) (Staphylococcus aureus (strain MRSA252)).